We begin with the raw amino-acid sequence, 130 residues long: Small ribosomal subunit protein uS8 (130 aa).

The protein belongs to the universal ribosomal protein uS8 family. In terms of assembly, part of the 30S ribosomal subunit.

One of the primary rRNA binding proteins, it binds directly to 16S rRNA central domain where it helps coordinate assembly of the platform of the 30S subunit. The polypeptide is Small ribosomal subunit protein uS8 (Methanococcus aeolicus (strain ATCC BAA-1280 / DSM 17508 / OCM 812 / Nankai-3)).